Consider the following 42-residue polypeptide: uncharacterized protein (42 aa).

This is an uncharacterized protein from Dictyostelium discoideum (Social amoeba).